A 180-amino-acid chain; its full sequence is uncharacterized protein (180 aa).

6 consecutive transmembrane segments (helical) span residues 4–24, 25–45, 57–77, 81–101, 124–144, and 156–176; these read KSNI…LSLF, IKNF…WLFI, NLLA…GIIY, FLDI…GILF, FLTL…LLIL, and IIRT…FYTF.

It localises to the cell membrane. This is an uncharacterized protein from Methanocaldococcus jannaschii (strain ATCC 43067 / DSM 2661 / JAL-1 / JCM 10045 / NBRC 100440) (Methanococcus jannaschii).